The primary structure comprises 1715 residues: Rho guanine nucleotide exchange factor TIAM2 (1715 aa).

Polar residues-rich tracts occupy residues 1–22 (MGNSESQYTFQGSKNHSNTVTG) and 218–229 (GSPSSQRPSPTD). Disordered regions lie at residues 1 to 27 (MGNSESQYTFQGSKNHSNTVTGAKQKP), 174 to 249 (FHNG…WYDS), 263 to 294 (SFLAPSTPDPSLPSSFPPSDTKKPFNQSSSLS), and 385 to 418 (TGSLSRKKRKLQEPRSMEGSEYFDSHSDGLNAEG). A lipid anchor (N-myristoyl glycine) is attached at Gly2. Over residues 235 to 245 (SKGSSLSSESS) the composition is skewed to low complexity. Over residues 395–411 (LQEPRSMEGSEYFDSHS) the composition is skewed to basic and acidic residues. Positions 504–618 (VVRKAGWLFF…WVTAIHSACA (115 aa)) constitute a PH 1 domain. The stretch at 665–692 (PKNRKAIENQIRQWEQNLEKFHMDLFRM) forms a coiled coil. In terms of domain architecture, RBD spans 831 to 902 (VQTYVHFQDN…YMQEQVYDEI (72 aa)). The 87-residue stretch at 911 to 997 (DVQLTKTGDM…GLTLVARPVT (87 aa)) folds into the PDZ domain. Residues 1092–1113 (THTNSMEAPTESHDPPPRPLAR) form a disordered region. The 195-residue stretch at 1120–1314 (RLRKVIQELV…EKVASHINEM (195 aa)) folds into the DH domain. The PH 2 domain occupies 1347-1478 (LLMHSTVSWL…KVIRSILREN (132 aa)). A disordered region spans residues 1515-1582 (SLKGLRTSSS…EGLAEFPDGL (68 aa)). Residues 1522 to 1532 (SSSSEWPSEPS) show a composition bias toward low complexity. The segment covering 1533 to 1552 (KGNSLDSDECSLSSGTQSSG) has biased composition (polar residues). The span at 1557-1572 (ESRRDSKSTELEKDAQ) shows a compositional bias: basic and acidic residues. A Phosphoserine modification is found at Ser1604. Residue Thr1662 is modified to Phosphothreonine.

It belongs to the TIAM family. Interacts with MAP1A, MAP1B, PARP1 and YWHAE. Interacts with CD44, PARD3 and MAPK8IP2. In terms of processing, phosphorylated on serine and threonine residues. Phosphorylated on Thr-1662 by Rho-kinase. Its phosphorylation by Rho-kinase inhibits its guanine nucleotide exchange activity, its interaction with MAP1A, MAP1B, PARP1 and YWHAE and reduces its ability to promote neurite growth. As to expression, expressed in fetal brain (at protein level). Expressed in the olfactory bulb, cortical plate of the cerebral cortex, caudate putamen, hippocampus, ependymal cells of the lateral surface of the lateral ventricles of the brain. Weakly expressed in heart, lung, liver, skeletal muscle, kidney and testis.

It is found in the cytoplasm. The protein localises to the cell projection. It localises to the lamellipodium. The protein resides in the filopodium. Its subcellular location is the growth cone. It is found in the neuron projection. The protein localises to the perikaryon. Modulates the activity of RHO-like proteins and connects extracellular signals to cytoskeletal activities. Acts as a GDP-dissociation stimulator protein that stimulates the GDP-GTP exchange activity of RHO-like GTPases and activates them. Activates specifically RAC1, but not CDC42 and RHOA. Mediates extracellular laminin signals to activate Rac1, contributing to neurite growth. Involved in lamellipodial formation and advancement of the growth cone of embryonic hippocampal neurons. Promotes migration of neurons in the cerebral cortex. When overexpressed, induces membrane ruffling accompanied by the accumulation of actin filaments along the altered plasma membrane. The polypeptide is Rho guanine nucleotide exchange factor TIAM2 (Mus musculus (Mouse)).